Consider the following 248-residue polypeptide: Urease accessory protein UreG 1 (248 aa).

Basic and acidic residues predominate over residues 1–14 (MLPEHHDHGHEHGG). The interval 1–36 (MLPEHHDHGHEHGGNGHGHGHRHQVNFDPTAAEPDP) is disordered. Position 53–60 (53–60 (GPVGSGKT)) interacts with GTP.

It belongs to the SIMIBI class G3E GTPase family. UreG subfamily. As to quaternary structure, homodimer. UreD, UreF and UreG form a complex that acts as a GTP-hydrolysis-dependent molecular chaperone, activating the urease apoprotein by helping to assemble the nickel containing metallocenter of UreC. The UreE protein probably delivers the nickel.

The protein resides in the cytoplasm. In terms of biological role, facilitates the functional incorporation of the urease nickel metallocenter. This process requires GTP hydrolysis, probably effectuated by UreG. The chain is Urease accessory protein UreG 1 from Saccharopolyspora erythraea (strain ATCC 11635 / DSM 40517 / JCM 4748 / NBRC 13426 / NCIMB 8594 / NRRL 2338).